The primary structure comprises 78 residues: UPF0349 protein BLi03401/BL03152 (78 aa).

This sequence belongs to the UPF0349 family.

This Bacillus licheniformis (strain ATCC 14580 / DSM 13 / JCM 2505 / CCUG 7422 / NBRC 12200 / NCIMB 9375 / NCTC 10341 / NRRL NRS-1264 / Gibson 46) protein is UPF0349 protein BLi03401/BL03152.